Reading from the N-terminus, the 247-residue chain is ATP synthase subunit a, chloroplastic (247 aa).

Helical transmembrane passes span 38–58 (QVLI…IIAV), 95–115 (VPFI…GALL), 134–154 (INTT…AGLS), 199–219 (LVVV…VMFL), and 220–240 (GLFT…AYIG).

Belongs to the ATPase A chain family. As to quaternary structure, F-type ATPases have 2 components, CF(1) - the catalytic core - and CF(0) - the membrane proton channel. CF(1) has five subunits: alpha(3), beta(3), gamma(1), delta(1), epsilon(1). CF(0) has four main subunits: a, b, b' and c.

The protein resides in the plastid. It localises to the chloroplast thylakoid membrane. In terms of biological role, key component of the proton channel; it plays a direct role in the translocation of protons across the membrane. The chain is ATP synthase subunit a, chloroplastic from Oryza sativa subsp. indica (Rice).